The primary structure comprises 89 residues: Sec translocon accessory complex subunit YrbF (89 aa).

Residues glycine 4–isoleucine 24 traverse the membrane as a helical segment.

Belongs to the YajC family. In terms of assembly, part of the SecDF-YidC-YajC translocase complex. The SecDF-YidC-YajC translocase forms a supercomplex with SecYEG, called the holo-translocon (HTL).

It is found in the cell membrane. Its function is as follows. The SecYEG-SecDF-YajC-YidC holo-translocon (HTL) protein secretase/insertase is a supercomplex required for protein secretion, insertion of proteins into membranes, and assembly of membrane protein complexes. While the SecYEG complex is essential for assembly of a number of proteins and complexes, the SecDF-YajC-YidC subcomplex facilitates these functions. The protein is Sec translocon accessory complex subunit YrbF (yrbF) of Bacillus subtilis (strain 168).